The chain runs to 210 residues: Glycerol-3-phosphate acyltransferase (210 aa).

A run of 6 helical transmembrane segments spans residues 8 to 28, 56 to 76, 87 to 107, 119 to 139, 144 to 164, and 165 to 185; these read LILL…LLLT, GLAA…VLIA, TMAV…WLGF, TIWV…LLVA, ISSA…VLLS, and GRPL…LIWA.

It belongs to the PlsY family. In terms of assembly, probably interacts with PlsX.

Its subcellular location is the cell inner membrane. The catalysed reaction is an acyl phosphate + sn-glycerol 3-phosphate = a 1-acyl-sn-glycero-3-phosphate + phosphate. It functions in the pathway lipid metabolism; phospholipid metabolism. Catalyzes the transfer of an acyl group from acyl-phosphate (acyl-PO(4)) to glycerol-3-phosphate (G3P) to form lysophosphatidic acid (LPA). This enzyme utilizes acyl-phosphate as fatty acyl donor, but not acyl-CoA or acyl-ACP. In Gluconobacter oxydans (strain 621H) (Gluconobacter suboxydans), this protein is Glycerol-3-phosphate acyltransferase.